The chain runs to 506 residues: Glucosidase 2 subunit beta (506 aa).

A signal peptide spans 1–23 (MKFSQWYTLTAPLLISSLYTVNA). The cysteines at positions 86 and 108 are disulfide-linked. Coiled coils occupy residues 172–243 (SLVA…LYET) and 338–374 (ESYR…LEYH). Positions 279–474 (ESCNNHLSML…KMKSPAACSP (196 aa)) constitute an MRH domain. Cystine bridges form between cysteine 431/cysteine 460 and cysteine 445/cysteine 472. The short motif at 503-506 (VDEL) is the ER retrieval sequence element.

As to quaternary structure, heterodimer of a catalytic subunit alpha (gls2) and a subunit beta (gtb1).

The protein resides in the endoplasmic reticulum. Subunit of glucosidase 2, which cleaves sequentially the 2 innermost alpha-1,3-linked glucose residues from the Glc(2)Man(9)GlcNAc(2) oligosaccharide precursor of immature glycoproteins in the endoplasmic reticulum (ER). Specifically required for the cleavage of the final glucose. The subunit beta retains the catalytic subunit alpha in the ER. The chain is Glucosidase 2 subunit beta (gtb1) from Schizosaccharomyces pombe (strain 972 / ATCC 24843) (Fission yeast).